The chain runs to 155 residues: Ribosome maturation factor RimP (155 aa).

The protein belongs to the RimP family.

Its subcellular location is the cytoplasm. In terms of biological role, required for maturation of 30S ribosomal subunits. This is Ribosome maturation factor RimP from Gloeothece citriformis (strain PCC 7424) (Cyanothece sp. (strain PCC 7424)).